A 447-amino-acid polypeptide reads, in one-letter code: Phosphoglucosamine mutase (447 aa).

Serine 106 (phosphoserine intermediate) is an active-site residue. The Mg(2+) site is built by serine 106, aspartate 245, aspartate 247, and aspartate 249. Serine 106 carries the phosphoserine modification.

It belongs to the phosphohexose mutase family. Requires Mg(2+) as cofactor. Post-translationally, activated by phosphorylation.

The enzyme catalyses alpha-D-glucosamine 1-phosphate = D-glucosamine 6-phosphate. Its function is as follows. Catalyzes the conversion of glucosamine-6-phosphate to glucosamine-1-phosphate. In Cupriavidus pinatubonensis (strain JMP 134 / LMG 1197) (Cupriavidus necator (strain JMP 134)), this protein is Phosphoglucosamine mutase.